Consider the following 125-residue polypeptide: Small ribosomal subunit protein eS26 (125 aa).

Belongs to the eukaryotic ribosomal protein eS26 family.

This is Small ribosomal subunit protein eS26 (RPS26) from Sterkiella nova (Ciliate).